The following is a 258-amino-acid chain: Phosphate import ATP-binding protein PstB (258 aa).

The ABC transporter domain occupies I13–I253. Residue G45–S52 participates in ATP binding.

The protein belongs to the ABC transporter superfamily. Phosphate importer (TC 3.A.1.7) family. The complex is composed of two ATP-binding proteins (PstB), two transmembrane proteins (PstC and PstA) and a solute-binding protein (PstS).

It is found in the cell membrane. It carries out the reaction phosphate(out) + ATP + H2O = ADP + 2 phosphate(in) + H(+). Its function is as follows. Part of the ABC transporter complex PstSACB involved in phosphate import. Responsible for energy coupling to the transport system. The chain is Phosphate import ATP-binding protein PstB from Methanosarcina barkeri (strain Fusaro / DSM 804).